A 215-amino-acid polypeptide reads, in one-letter code: Ribosomal RNA small subunit methyltransferase G (215 aa).

Residues Gly78, Leu83, 128–129, and Arg146 each bind S-adenosyl-L-methionine; that span reads AE.

Belongs to the methyltransferase superfamily. RNA methyltransferase RsmG family.

Its subcellular location is the cytoplasm. It carries out the reaction guanosine(527) in 16S rRNA + S-adenosyl-L-methionine = N(7)-methylguanosine(527) in 16S rRNA + S-adenosyl-L-homocysteine. Its function is as follows. Specifically methylates the N7 position of guanine in position 527 of 16S rRNA. In Anaeromyxobacter dehalogenans (strain 2CP-C), this protein is Ribosomal RNA small subunit methyltransferase G.